The sequence spans 194 residues: MRKAEVKRKTRETDIYVELNIDGKGNYDIATGIGFFDHMLSLFAKHGLFDLKVVAKGDLEVDTHHTVEDVGIVLGNAFLKAAGDKKSIKRFSTFYVPMDEALVRVSVDISGRPFLYCDLPLKAERVGNFETENVEEFLRAFAYNFGITLHVELLHGSNSHHIIEATFKALGRALDEALRIDERVEGIPSTKGIL.

The protein belongs to the imidazoleglycerol-phosphate dehydratase family.

Its subcellular location is the cytoplasm. It catalyses the reaction D-erythro-1-(imidazol-4-yl)glycerol 3-phosphate = 3-(imidazol-4-yl)-2-oxopropyl phosphate + H2O. Its pathway is amino-acid biosynthesis; L-histidine biosynthesis; L-histidine from 5-phospho-alpha-D-ribose 1-diphosphate: step 6/9. The sequence is that of Imidazoleglycerol-phosphate dehydratase from Thermoanaerobacter pseudethanolicus (strain ATCC 33223 / 39E) (Clostridium thermohydrosulfuricum).